Consider the following 797-residue polypeptide: Trafficking protein particle complex subunit 12 (797 aa).

Disordered regions lie at residues 1 to 257 (META…PSLS) and 286 to 338 (SNPN…VPES). The segment covering 9–23 (QSPSEASPSAQAGPE) has biased composition (low complexity). Residues 29-43 (MSREEESQPLYHEET) show a composition bias toward basic and acidic residues. The span at 47-58 (GGDEFASEENEP) shows a compositional bias: acidic residues. Composition is skewed to basic and acidic residues over residues 66–75 (FGDKLNEHMM) and 107–121 (ATDH…KEVV). A phosphoserine mark is found at Ser-125 and Ser-128. Thr-130 carries the phosphothreonine modification. A compositionally biased stretch (basic and acidic residues) spans 173-185 (VGPKDSLAPREEQ). A compositionally biased stretch (polar residues) spans 206–216 (IFSQATATPSQ). Positions 232 to 244 (SPSFSSTSETSAK) are enriched in low complexity. Phosphoserine is present on residues Ser-234, Ser-309, and Ser-314. TPR repeat units lie at residues 607 to 640 (GRVL…YPEQ), 642 to 675 (PQLL…TQKL), 682 to 715 (IMVL…DPTN), and 716 to 749 (AVAN…DPRH).

In terms of assembly, component of the multisubunit TRAPP (transport protein particle) complex, which includes at least TRAPPC2, TRAPPC2L, TRAPPC3, TRAPPC3L, TRAPPC4, TRAPPC5, TRAPPC8, TRAPPC9, TRAPPC10, TRAPPC11 and TRAPPC12. Interacts with CENPE. Phosphorylated as the cells enter mitosis but is dephosphorylated at or before the onset of anaphase. The phosphorylated form recruits CENPE to kinetochores more efficiently than the non-phosphorylated form.

It is found in the endoplasmic reticulum-Golgi intermediate compartment. The protein localises to the nucleus. Its function is as follows. Component of the TRAPP complex, which is involved in endoplasmic reticulum to Golgi apparatus trafficking at a very early stage. Also plays a role in chromosome congression, kinetochore assembly and stability and controls the recruitment of CENPE to the kinetochores. This is Trafficking protein particle complex subunit 12 from Mus musculus (Mouse).